The sequence spans 814 residues: Acyl-coenzyme A dehydrogenase (814 aa).

Glutamate 497 (proton acceptor) is an active-site residue.

It belongs to the acyl-CoA dehydrogenase family. Requires FAD as cofactor.

It carries out the reaction a medium-chain 2,3-saturated fatty acyl-CoA + oxidized [electron-transfer flavoprotein] + H(+) = a medium-chain (2E)-enoyl-CoA + reduced [electron-transfer flavoprotein]. The catalysed reaction is a long-chain 2,3-saturated fatty acyl-CoA + oxidized [electron-transfer flavoprotein] + H(+) = a long-chain (2E)-enoyl-CoA + reduced [electron-transfer flavoprotein]. It functions in the pathway lipid metabolism; fatty acid beta-oxidation. Functionally, catalyzes the dehydrogenation of acyl-coenzymes A (acyl-CoAs) to 2-enoyl-CoAs, the first step of the beta-oxidation cycle of fatty acid degradation. Is required for E.coli to utilize dodecanoate or oleate as the sole carbon and energy source for growth. In Escherichia coli (strain K12), this protein is Acyl-coenzyme A dehydrogenase.